A 631-amino-acid chain; its full sequence is Protelomerase (631 aa).

R275, K300, R383, and H416 together coordinate DNA. Catalysis depends on Y425, which acts as the Nucleophile. Residues 533–592 (LPDEESVETIDEPDDESQDDELDEDEIELDEGGGDEPTEEEGPEEHQPTALKPVFKPAKN) are disordered. The segment covering 534–575 (PDEESVETIDEPDDESQDDELDEDEIELDEGGGDEPTEEEGP) has biased composition (acidic residues).

This sequence belongs to the Caudoviricetes Protelomerase family. As to quaternary structure, monomer. Homodimer; in presence of DNA.

Functionally, converts the circular intermediates produced by the viral replication and carrying a joined telomere site to a linear DNA molecule with covalently closed hairpin ends. The viral circular DNA is cleaved at a palindromic site called telRL thereby generating a linear prophage plasmid with telomeres. Binds covalently to the 3'-phosphoryl of the cleaved strands. This Escherichia coli (Bacteriophage N15) protein is Protelomerase.